Consider the following 109-residue polypeptide: uncharacterized protein (109 aa).

Residues 1-25 (MKGIFLVVQLGFSIMVFLFLAAVNW) form the signal peptide. The helical transmembrane segment at 73–95 (YPVMSALMIISFLYVLAALFLLI) threads the bilayer.

The protein localises to the membrane. This is an uncharacterized protein from Bacillus subtilis (strain 168).